A 338-amino-acid polypeptide reads, in one-letter code: MEKLDKILEELKLLLSSVSSLKELQEVRSKFLGSKGVIKELLKKIKEVPSEERKEYGKRVNLLKEEAEKLIKEKEEELKERELEEKLKGEWVDLSIPPARTVGSLHPITVTLERIVTIFRGMGFEVEEGPEVEREEYNFDMLNIPKEHPARDMQDTFYVNREGYLLRTHTSPVQIRTMLKKKPPIQIIAPGKVYRRDDDPTHSPMFHQVEGLVVNEYANFRHMKYVIEEFLKKFFETDLPVRFRTSYFPFTEPSAEVDIGCVICHQEGCRVCKHTGWLEVMGCGMVHPKVLENCGIDTDFYQGFAFGMGVERLAMLLFGIDNIKLFYENDLRFIKQFF.

Residue glutamate 252 coordinates Mg(2+).

This sequence belongs to the class-II aminoacyl-tRNA synthetase family. Phe-tRNA synthetase alpha subunit type 1 subfamily. Tetramer of two alpha and two beta subunits. Requires Mg(2+) as cofactor.

Its subcellular location is the cytoplasm. The catalysed reaction is tRNA(Phe) + L-phenylalanine + ATP = L-phenylalanyl-tRNA(Phe) + AMP + diphosphate + H(+). The protein is Phenylalanine--tRNA ligase alpha subunit (pheS) of Aquifex aeolicus (strain VF5).